The primary structure comprises 97 residues: Small ribosomal subunit protein bS6 (97 aa).

Belongs to the bacterial ribosomal protein bS6 family.

Binds together with bS18 to 16S ribosomal RNA. The polypeptide is Small ribosomal subunit protein bS6 (Bifidobacterium longum (strain NCC 2705)).